A 133-amino-acid polypeptide reads, in one-letter code: MAEKKKGGRWGIAHIYSSYNNTIITITDITGAEIIARVSGGMIVKADRDEGNPYTAMQAALRAAAIAKEKGIDGVHIKVRAPGGNKHTTPGPGAQAAIRALARAGLKIGRIEDVTPIPHDGTRPPGGKRGRRV.

The tract at residues 114–133 (VTPIPHDGTRPPGGKRGRRV) is disordered.

Belongs to the universal ribosomal protein uS11 family. As to quaternary structure, part of the 30S ribosomal subunit.

Its function is as follows. Located on the platform of the 30S subunit. The chain is Small ribosomal subunit protein uS11 from Archaeoglobus fulgidus (strain ATCC 49558 / DSM 4304 / JCM 9628 / NBRC 100126 / VC-16).